A 1212-amino-acid chain; its full sequence is DNA-directed RNA polymerase subunit beta' (1212 aa).

Residues Cys60, Cys62, Cys75, and Cys78 each coordinate Zn(2+). Residues Asp450, Asp452, and Asp454 each coordinate Mg(2+). 4 residues coordinate Zn(2+): Cys819, Cys893, Cys900, and Cys903.

It belongs to the RNA polymerase beta' chain family. As to quaternary structure, the RNAP catalytic core consists of 2 alpha, 1 beta, 1 beta' and 1 omega subunit. When a sigma factor is associated with the core the holoenzyme is formed, which can initiate transcription. It depends on Mg(2+) as a cofactor. Zn(2+) serves as cofactor.

It catalyses the reaction RNA(n) + a ribonucleoside 5'-triphosphate = RNA(n+1) + diphosphate. Functionally, DNA-dependent RNA polymerase catalyzes the transcription of DNA into RNA using the four ribonucleoside triphosphates as substrates. This chain is DNA-directed RNA polymerase subunit beta', found in Streptococcus uberis (strain ATCC BAA-854 / 0140J).